We begin with the raw amino-acid sequence, 599 residues long: MADKLTRIAIVNHDKCKPKKCRQECKKSCPVVRMGKLCIEVTPQSKIAWISETLCIGCGICIKKCPFGALSIVNLPSNLEKETTHRYCANAFKLHRLPIPRPGEVLGLVGTNGIGKSTALKILAGKQKPNLGKYDDPPDWQEILTYFRGSELQNYFTKILEDDLKAIIKPQYVDQIPKAAKGTVGSILDRKDETKTQAIVCQQLDLTHLKERNVEDLSGGELQRFACAVVCIQKADIFMFDEPSSYLDVKQRLKAAITIRSLINPDRYIIVVEHDLSVLDYLSDFICCLYGVPSAYGVVTMPFSVREGINIFLDGYVPTENLRFRDASLVFKVAETANEEEVKKMCMYKYPGMKKKMGEFELAIVAGEFTDSEIMVMLGENGTGKTTFIRMLAGRLKPDEGGEVPVLNVSYKPQKISPKSTGSVRQLLHEKIRDAYTHPQFVTDVMKPLQIENIIDQEVQTLSGGELQRVALALCLGKPADVYLIDEPSAYLDSEQRLMAARVVKRFILHAKKTAFVVEHDFIMATYLADRVIVFDGVPSKNTVANSPQTLLAGMNKFLSQLEITFRRDPNNYRPRINKLNSIKDVEQKKSGNYFFLDD.

4Fe-4S ferredoxin-type domains follow at residues 7–37 (RIAI…MGKL) and 46–75 (KIAW…IVNL). Lysine 20 participates in a covalent cross-link: Glycyl lysine isopeptide (Lys-Gly) (interchain with G-Cter in ubiquitin). ABC transporter domains are found at residues 79-315 (LEKE…FLDG) and 342-562 (VKKM…LSQL). ATP contacts are provided by residues 110–117 (GTNGIGKS) and 379–386 (GENGTGKT). Phosphoserine is present on serine 417. Threonine 550 bears the Phosphothreonine mark.

Belongs to the ABC transporter superfamily. ABCE family. (Microbial infection) Interacts with Chandipura virus matrix protein. In terms of assembly, interacts with PINK1. Interacts with CNOT4. Interacts with PELO. Probably heterodimerizes with RNASEL; this interaction inhibits RNASEL. As to quaternary structure, (Microbial infection) Interacts with HIV-1 proteins Vif and Gag. (Microbial infection) Interacts with HIV-2 protein Gag. Post-translationally, ubiquitinated by CNOT4. Ubiquitination mediates the recruitment of autophagy receptors to the mitochondrial outer membrane and initiates mitophagy.

It is found in the cytoplasm. The protein resides in the mitochondrion. The enzyme catalyses GTP + H2O = GDP + phosphate + H(+). It catalyses the reaction ATP + H2O = ADP + phosphate + H(+). The catalysed reaction is CTP + H2O = CDP + phosphate + H(+). It carries out the reaction UTP + H2O = UDP + phosphate + H(+). Functionally, nucleoside-triphosphatase (NTPase) involved in ribosome recycling by mediating ribosome disassembly. Able to hydrolyze ATP, GTP, UTP and CTP. Splits ribosomes into free 60S subunits and tRNA- and mRNA-bound 40S subunits. Acts either after canonical termination facilitated by release factors (ETF1/eRF1) or after recognition of stalled and vacant ribosomes by mRNA surveillance factors (PELO/Pelota). Involved in the No-Go Decay (NGD) pathway: recruited to stalled ribosomes by the Pelota-HBS1L complex, and drives the disassembly of stalled ribosomes, followed by degradation of damaged mRNAs as part of the NGD pathway. Also plays a role in quality control of translation of mitochondrial outer membrane-localized mRNA. As part of the PINK1-regulated signaling, ubiquitinated by CNOT4 upon mitochondria damage; this modification generates polyubiquitin signals that recruit autophagy receptors to the mitochondrial outer membrane and initiate mitophagy. RNASEL-specific protein inhibitor which antagonizes the binding of 2-5A (5'-phosphorylated 2',5'-linked oligoadenylates) to RNASEL. Negative regulator of the anti-viral effect of the interferon-regulated 2-5A/RNASEL pathway. (Microbial infection) May act as a chaperone for post-translational events during HIV-1 capsid assembly. In terms of biological role, (Microbial infection) Plays a role in the down-regulation of the 2-5A/RNASEL pathway during encephalomyocarditis virus (EMCV) and HIV-1 infections. The sequence is that of ATP-binding cassette sub-family E member 1 (ABCE1) from Homo sapiens (Human).